We begin with the raw amino-acid sequence, 187 residues long: Elongation factor P (187 aa).

The protein belongs to the elongation factor P family.

It localises to the cytoplasm. It participates in protein biosynthesis; polypeptide chain elongation. Functionally, involved in peptide bond synthesis. Stimulates efficient translation and peptide-bond synthesis on native or reconstituted 70S ribosomes in vitro. Probably functions indirectly by altering the affinity of the ribosome for aminoacyl-tRNA, thus increasing their reactivity as acceptors for peptidyl transferase. The sequence is that of Elongation factor P from Flavobacterium psychrophilum (strain ATCC 49511 / DSM 21280 / CIP 103535 / JIP02/86).